We begin with the raw amino-acid sequence, 469 residues long: Transcription factor E2FB (469 aa).

2 disordered regions span residues 1–28 (MSEEVPQQFPSSKRQLHPSLSSMKPPLV) and 84–118 (QTPVSGKGGKAKKTSRSAKSNKSGTLASGSNAGSP). Polar residues-rich tracts occupy residues 8–22 (QFPSSKRQLHPSLSS) and 100–118 (SAKSNKSGTLASGSNAGSP). Residues 129–194 (RYDSSLGLLT…TLKNRIQWKG (66 aa)) mediate DNA binding. Positions 202–246 (ETIESIANLQDEVQNLAAEEARLDDQIRESQERLTSLSEDENNKR) form a coiled coil. The segment at 210–238 (LQDEVQNLAAEEARLDDQIRESQERLTSL) is leucine-zipper. The tract at residues 319-374 (PQADEPSNVPDEPSNVPDVPSNLPSTSGLPENHDVSMPMKEESTERNMETQEVDDT) is disordered. Basic and acidic residues predominate over residues 349–374 (ENHDVSMPMKEESTERNMETQEVDDT). Residues 403–419 (DYWFRSEVGEVSITDMW) are retinoblastoma protein binding. The disordered stretch occupies residues 426-469 (DWNQMITFDQDHAGPSDNKILEQPQTPSSPTPEESTATRSPTGS). Low complexity predominate over residues 447–469 (EQPQTPSSPTPEESTATRSPTGS).

It belongs to the E2F/DP family. Heterodimer with DP proteins. Interacts (via dimerization domain) preferentially with DPA, but also with DPB. Interacts with PURA1 and retinoblastoma-related protein RBR1. Component of a DREAM-like complex which modulates a variety of developmentally regulated genes and of the mitotic genes in proliferating and differentiated cells. Interacts with MYB3R4 only at early stages of leaves development. In terms of processing, phosphorylated. In terms of tissue distribution, expressed in proliferating cells and several differentiated tissues. Detected in inflorescence and shoot apical meristems, cotyledonary vascular tissues, leaf primordia, young leaves, base of trichomes, central cylinder and elongation zone of roots, lateral root primordia, flowers, pistils of immature flowers and pollen grains.

The protein resides in the cytoplasm. It is found in the nucleus. Transcription activator that binds DNA cooperatively with DP proteins through the E2 recognition site, 5'-TTTC[CG]CGC-3' found in the promoter region of a number of genes whose products are involved in cell cycle regulation or in DNA replication. The binding of retinoblastoma-related proteins represses transactivation. Involved in the control of cell-cycle progression from G1 to S phase and from G2 to M phase. Stimulates cell proliferation and delays differentiation. Represses cell enlargement and endoreduplication in auxin-free conditions. This Arabidopsis thaliana (Mouse-ear cress) protein is Transcription factor E2FB (E2FB).